A 379-amino-acid polypeptide reads, in one-letter code: Cytochrome b (379 aa).

Helical transmembrane passes span 33-53 (FGSL…FLAM), 77-98 (WLIR…FIHV), 113-133 (WNIG…GYVL), and 178-198 (FFAF…VHLL). 2 residues coordinate heme b: His-83 and His-97. Heme b contacts are provided by His-182 and His-196. His-201 provides a ligand contact to a ubiquinone. The next 4 membrane-spanning stretches (helical) occupy residues 226–246 (IKDL…ALFF), 288–308 (LGGV…PLLN), 320–340 (ITQT…WIGG), and 347–367 (FTMI…ILMP).

Belongs to the cytochrome b family. As to quaternary structure, the cytochrome bc1 complex contains 11 subunits: 3 respiratory subunits (MT-CYB, CYC1 and UQCRFS1), 2 core proteins (UQCRC1 and UQCRC2) and 6 low-molecular weight proteins (UQCRH/QCR6, UQCRB/QCR7, UQCRQ/QCR8, UQCR10/QCR9, UQCR11/QCR10 and a cleavage product of UQCRFS1). This cytochrome bc1 complex then forms a dimer. It depends on heme b as a cofactor.

The protein resides in the mitochondrion inner membrane. In terms of biological role, component of the ubiquinol-cytochrome c reductase complex (complex III or cytochrome b-c1 complex) that is part of the mitochondrial respiratory chain. The b-c1 complex mediates electron transfer from ubiquinol to cytochrome c. Contributes to the generation of a proton gradient across the mitochondrial membrane that is then used for ATP synthesis. This is Cytochrome b (MT-CYB) from Akodon dolores (Dolorous grass mouse).